The chain runs to 545 residues: MMGHRPVLVLSQNTKRESGRKVQSGNINAAKTIADIIRTCLGPKSMMKMLLDPMGGIVMTNDGNAILREIQVQHPAAKSMVEISRTQDEEVGDGTTSVIILAGEMLSVAEHFLEQQMHPTVVISAYRKALDDMISTLKKISIPVDINDSDMMLNIINSSITTKAISRWSSLACNIALDAVKMVQFEENGRKEIDIKKYARVEKIPGGIIEDSCVLRGVMINKDVTHPRMRRYIKNPRIVLLDSSLEYKKGESQTDIEITREEDFTRILQMEEEYIQQLCEDIIQLKPDVVITEKGISDLAQHYLMRANITAIRRVRKTDNNRIARACGARIVSRPEELREDDVGTGAGLLEIKKIGDEYFTFITDCKDPKACTILLRGASKEILSEVERNLQDAMQVCRNVLLDPQLVPGGGASEMAVAHALTEKSKAMTGVEQWPYRAVAQALEVIPRTLIQNCGASTIRLLTSLRAKHTQENCETWGVNGETGTLVDMKELGIWEPLAVKLQTYKTAVETAVLLLRIDDIVSGHKKKGDDQSRQGGAPDAGQE.

At methionine 1 the chain carries N-acetylmethionine. A disordered region spans residues 1-24; that stretch reads MMGHRPVLVLSQNTKRESGRKVQS. Phosphoserine is present on serine 11. Lysine 15 is covalently cross-linked (Glycyl lysine isopeptide (Lys-Gly) (interchain with G-Cter in SUMO2)). Glycine 42 serves as a coordination point for ADP. Glycine 42 contacts ATP. Position 93 (aspartate 93) interacts with Mg(2+). The ADP site is built by glycine 94, threonine 95, threonine 96, serine 97, threonine 162, and lysine 163. Residues glycine 94, threonine 95, and threonine 96 each contribute to the ATP site. Serine 170 bears the Phosphoserine mark. Lysine 222 carries the N6-acetyllysine modification. A phosphoserine mark is found at serine 243 and serine 244. Tyrosine 247 carries the post-translational modification Phosphotyrosine. Residues lysine 248 and lysine 249 each participate in a glycyl lysine isopeptide (Lys-Gly) (interchain with G-Cter in SUMO2) cross-link. Serine 252 carries the post-translational modification Phosphoserine. A disulfide bridge connects residues cysteine 366 and cysteine 372. A Glycyl lysine isopeptide (Lys-Gly) (interchain with G-Cter in SUMO2) cross-link involves residue lysine 381. Glycine 411 is a binding site for ADP. Residue glycine 411 coordinates ATP. Phosphothreonine is present on residues threonine 430 and threonine 459. ADP is bound by residues glycine 482, glutamate 483, glutamate 497, and lysine 502. Glycine 482 serves as a coordination point for ATP. An ATP-binding site is contributed by glutamate 497. The segment at 526–545 is disordered; sequence HKKKGDDQSRQGGAPDAGQE.

Belongs to the TCP-1 chaperonin family. As to quaternary structure, component of the chaperonin-containing T-complex (TRiC), a hexadecamer composed of two identical back-to-back stacked rings enclosing a protein folding chamber. Each ring is made up of eight different subunits: TCP1/CCT1, CCT2, CCT3, CCT4, CCT5, CCT6A/CCT6, CCT7, CCT8. Interacts with PACRG. Interacts with DNAAF4. Interacts with DLEC1.

The protein resides in the cytoplasm. It carries out the reaction ATP + H2O = ADP + phosphate + H(+). Its function is as follows. Component of the chaperonin-containing T-complex (TRiC), a molecular chaperone complex that assists the folding of actin, tubulin and other proteins upon ATP hydrolysis. The TRiC complex mediates the folding of WRAP53/TCAB1, thereby regulating telomere maintenance. As part of the TRiC complex may play a role in the assembly of BBSome, a complex involved in ciliogenesis regulating transports vesicles to the cilia. This chain is T-complex protein 1 subunit gamma (CCT3), found in Pongo abelii (Sumatran orangutan).